Consider the following 1110-residue polypeptide: cGMP-specific 3',5'-cyclic phosphodiesterase (1110 aa).

Composition is skewed to low complexity over residues 1–25 and 35–55; these read MTDVSAAAGGATAPAETAATSSSAS and TSTAMAAPTATPTTAATASGA. Disordered stretches follow at residues 1–55, 67–128, and 184–203; these read MTDV…ASGA, ISNQ…QQDV, and ASPTVQQKSPRSLSNSSASS. The segment covering 88–103 has biased composition (pro residues); it reads APYPPVPAAKPKPTPT. The span at 192–203 shows a compositional bias: low complexity; sequence SPRSLSNSSASS. GAF domains are found at residues 233-385 and 417-601; these read DIDV…GIGI and NLEC…GLGI. A PDEase domain is found at 631 to 954; sequence SQDQTEKLTQ…RNWQDLAEKV (324 aa). The Proton donor role is filled by His707. His711, His747, Asp748, and Asp858 together coordinate a divalent metal cation. Disordered regions lie at residues 997–1028 and 1040–1110; these read AQHGAGAGGDDSHTPEHQRSGSRLSMKKTGAL and LYNS…CSLL. 2 stretches are compositionally biased toward basic and acidic residues: residues 1006 to 1015 and 1056 to 1068; these read DDSHTPEHQR and LESHVSEDMDDKS. Residues 1082–1097 show a composition bias toward low complexity; it reads GRMSASSSTSSAGTVV. The segment covering 1100–1110 has biased composition (basic residues); sequence SKKRSKLCSLL. Cys1107 is modified (cysteine methyl ester). Cys1107 carries S-farnesyl cysteine lipidation. The propeptide at 1108-1110 is removed in mature form; that stretch reads SLL.

Belongs to the cyclic nucleotide phosphodiesterase family. As to quaternary structure, interacts with PrBP. A divalent metal cation is required as a cofactor.

It localises to the cell membrane. The catalysed reaction is 3',5'-cyclic GMP + H2O = GMP + H(+). Its function is as follows. Has a role regulating cGMP transport in Malpighian tubule principal cells. In Drosophila pseudoobscura pseudoobscura (Fruit fly), this protein is cGMP-specific 3',5'-cyclic phosphodiesterase.